Consider the following 999-residue polypeptide: Hypoxia up-regulated protein 1 (999 aa).

The N-terminal stretch at 1-32 (MAATVRRQRPRRLLCWALVAVLLADLLALSDT) is a signal peptide. Residues asparagine 155, asparagine 222, and asparagine 515 are each glycosylated (N-linked (GlcNAc...) asparagine). The interval 564–694 (VEDSPEEEST…KKQKPARKQK (131 aa)) is disordered. Serine 567 is subject to Phosphoserine. Over residues 574–583 (LTKLGNTISS) the composition is skewed to polar residues. The N-linked (GlcNAc...) asparagine glycan is linked to asparagine 596. 2 stretches are compositionally biased toward basic and acidic residues: residues 611–626 (GSKD…KEEA) and 641–668 (PKGD…KPNE). N-linked (GlcNAc...) asparagine glycosylation is found at asparagine 830, asparagine 862, and asparagine 869. N6-acetyllysine is present on lysine 883. Residues 909-999 (AKFTKPRPRP…QKRPLKNDEL (91 aa)) form a disordered region. 2 N-linked (GlcNAc...) asparagine glycosylation sites follow: asparagine 922 and asparagine 931. Residues 949–962 (EEAKAILEPDKEGL) show a composition bias toward basic and acidic residues. A Prevents secretion from ER motif is present at residues 996-999 (NDEL).

It belongs to the heat shock protein 70 family. Part of a large chaperone multiprotein complex comprising DNAJB11, HSP90B1, HSPA5, HYOU, PDIA2, PDIA4, PDIA6, PPIB, SDF2L1, UGGT1 and very small amounts of ERP29, but not, or at very low levels, CALR nor CANX. As to expression, selectively expressed by cultured astrocytes but not endothelial cells, microglia or neurons.

Its subcellular location is the endoplasmic reticulum lumen. In terms of biological role, has a pivotal role in cytoprotective cellular mechanisms triggered by oxygen deprivation. Promotes HSPA5/BiP-mediated ATP nucleotide exchange and thereby activates the unfolded protein response (UPR) pathway in the presence of endoplasmic reticulum stress. May play a role as a molecular chaperone and participate in protein folding. This is Hypoxia up-regulated protein 1 (Hyou1) from Rattus norvegicus (Rat).